The sequence spans 161 residues: 6,7-dimethyl-8-ribityllumazine synthase (161 aa).

5-amino-6-(D-ribitylamino)uracil contacts are provided by residues Trp31, 63 to 65, and 85 to 87; these read SFE and VVI. (2S)-2-hydroxy-3-oxobutyl phosphate is bound at residue 90–91; that stretch reads GT. The Proton donor role is filled by His93. Phe118 provides a ligand contact to 5-amino-6-(D-ribitylamino)uracil. Arg132 contributes to the (2S)-2-hydroxy-3-oxobutyl phosphate binding site.

This sequence belongs to the DMRL synthase family.

It catalyses the reaction (2S)-2-hydroxy-3-oxobutyl phosphate + 5-amino-6-(D-ribitylamino)uracil = 6,7-dimethyl-8-(1-D-ribityl)lumazine + phosphate + 2 H2O + H(+). It participates in cofactor biosynthesis; riboflavin biosynthesis; riboflavin from 2-hydroxy-3-oxobutyl phosphate and 5-amino-6-(D-ribitylamino)uracil: step 1/2. In terms of biological role, catalyzes the formation of 6,7-dimethyl-8-ribityllumazine by condensation of 5-amino-6-(D-ribitylamino)uracil with 3,4-dihydroxy-2-butanone 4-phosphate. This is the penultimate step in the biosynthesis of riboflavin. The protein is 6,7-dimethyl-8-ribityllumazine synthase of Pseudarthrobacter chlorophenolicus (strain ATCC 700700 / DSM 12829 / CIP 107037 / JCM 12360 / KCTC 9906 / NCIMB 13794 / A6) (Arthrobacter chlorophenolicus).